The following is a 431-amino-acid chain: Serine hydroxymethyltransferase (431 aa).

122-124 serves as a coordination point for (6S)-5,6,7,8-tetrahydrofolate; it reads GHI. Position 228 is an N6-(pyridoxal phosphate)lysine (K228). (6S)-5,6,7,8-tetrahydrofolate is bound at residue E245.

This sequence belongs to the SHMT family. In terms of assembly, homodimer. Pyridoxal 5'-phosphate is required as a cofactor.

It is found in the cytoplasm. It functions in the pathway amino-acid biosynthesis; glycine biosynthesis; glycine from L-serine: step 1/1. In terms of biological role, catalyzes the reversible interconversion of serine and glycine with a modified folate serving as the one-carbon carrier. Also exhibits a pteridine-independent aldolase activity toward beta-hydroxyamino acids, producing glycine and aldehydes, via a retro-aldol mechanism. The chain is Serine hydroxymethyltransferase from Thermococcus kodakarensis (strain ATCC BAA-918 / JCM 12380 / KOD1) (Pyrococcus kodakaraensis (strain KOD1)).